A 69-amino-acid polypeptide reads, in one-letter code: Sec-independent protein translocase protein TatA (69 aa).

The helical transmembrane segment at 1–21 (MFGLGGQELVLILLIVLLLFG) threads the bilayer. Residues 47-63 (EEEFNKSMDDNPKKEKA) are compositionally biased toward basic and acidic residues. A disordered region spans residues 47–69 (EEEFNKSMDDNPKKEKATTASKS).

The protein belongs to the TatA/E family. In terms of assembly, forms a complex with TatC.

It is found in the cell inner membrane. Its function is as follows. Part of the twin-arginine translocation (Tat) system that transports large folded proteins containing a characteristic twin-arginine motif in their signal peptide across membranes. TatA could form the protein-conducting channel of the Tat system. This is Sec-independent protein translocase protein TatA from Chlorobium chlorochromatii (strain CaD3).